Consider the following 66-residue polypeptide: Beta-toxin ChFII.9 (66 aa).

In terms of domain architecture, LCN-type CS-alpha/beta spans 1–66 (KEGYIVDYHT…VWPLPNKRCK (66 aa)). 4 disulfide bridges follow: C12-C65, C16-C41, C25-C46, and C29-C48. Residue K66 is modified to Lysine amide.

In terms of tissue distribution, expressed by the venom gland.

It is found in the secreted. Functionally, beta toxins bind voltage independently at site-4 of sodium channels (Nav) and shift the activation voltage toward more negative potentials, thereby affecting sodium channel activation CC and promoting spontaneous and repetitive firing. The sequence is that of Beta-toxin ChFII.9 from Centruroides hirsutipalpus (Scorpion).